Here is a 117-residue protein sequence, read N- to C-terminus: UPF0342 protein LBUL_1430 (117 aa).

It belongs to the UPF0342 family.

The chain is UPF0342 protein LBUL_1430 from Lactobacillus delbrueckii subsp. bulgaricus (strain ATCC BAA-365 / Lb-18).